Reading from the N-terminus, the 923-residue chain is RNA polymerase-associated protein RapA (923 aa).

A Helicase ATP-binding domain is found at 162 to 332 (EVGNRVNPRV…FARLRLLDPE (171 aa)). 175–182 (DEVGLGKT) contributes to the ATP binding site. The DEAH box signature appears at 278–281 (DEAH). The Helicase C-terminal domain maps to 443–597 (KIDWLIDFLK…TCPMGMALFS (155 aa)).

The protein belongs to the SNF2/RAD54 helicase family. RapA subfamily. In terms of assembly, interacts with the RNAP. Has a higher affinity for the core RNAP than for the holoenzyme. Its ATPase activity is stimulated by binding to RNAP.

Its function is as follows. Transcription regulator that activates transcription by stimulating RNA polymerase (RNAP) recycling in case of stress conditions such as supercoiled DNA or high salt concentrations. Probably acts by releasing the RNAP, when it is trapped or immobilized on tightly supercoiled DNA. Does not activate transcription on linear DNA. Probably not involved in DNA repair. In Haemophilus influenzae (strain ATCC 51907 / DSM 11121 / KW20 / Rd), this protein is RNA polymerase-associated protein RapA.